The following is a 343-amino-acid chain: Anthranilate phosphoribosyltransferase (343 aa).

5-phospho-alpha-D-ribose 1-diphosphate is bound by residues Gly84, 87 to 88 (GD), Thr92, 94 to 97 (NIST), 112 to 120 (KHGNRSASS), and Ser124. Gly84 contacts anthranilate. Residue Ser96 coordinates Mg(2+). Asn115 is an anthranilate binding site. An anthranilate-binding site is contributed by Arg170. Mg(2+)-binding residues include Asp229 and Glu230.

Belongs to the anthranilate phosphoribosyltransferase family. As to quaternary structure, homodimer. Mg(2+) is required as a cofactor.

It catalyses the reaction N-(5-phospho-beta-D-ribosyl)anthranilate + diphosphate = 5-phospho-alpha-D-ribose 1-diphosphate + anthranilate. Its pathway is amino-acid biosynthesis; L-tryptophan biosynthesis; L-tryptophan from chorismate: step 2/5. Functionally, catalyzes the transfer of the phosphoribosyl group of 5-phosphorylribose-1-pyrophosphate (PRPP) to anthranilate to yield N-(5'-phosphoribosyl)-anthranilate (PRA). The sequence is that of Anthranilate phosphoribosyltransferase from Bordetella pertussis (strain Tohama I / ATCC BAA-589 / NCTC 13251).